Reading from the N-terminus, the 365-residue chain is Spermidine/putrescine import ATP-binding protein PotA (365 aa).

The ABC transporter domain occupies 7 to 237 (LTLADITKRF…PNNLFVASFI (231 aa)). 39-46 (GPSGCGKT) contacts ATP.

Belongs to the ABC transporter superfamily. Spermidine/putrescine importer (TC 3.A.1.11.1) family. In terms of assembly, the complex is composed of two ATP-binding proteins (PotA), two transmembrane proteins (PotB and PotC) and a solute-binding protein (PotD).

It localises to the cell inner membrane. The enzyme catalyses ATP + H2O + polyamine-[polyamine-binding protein]Side 1 = ADP + phosphate + polyamineSide 2 + [polyamine-binding protein]Side 1.. Functionally, part of the ABC transporter complex PotABCD involved in spermidine/putrescine import. Responsible for energy coupling to the transport system. The sequence is that of Spermidine/putrescine import ATP-binding protein PotA from Hahella chejuensis (strain KCTC 2396).